The chain runs to 231 residues: NAD(+) ADP-ribosyltransferase (231 aa).

It carries out the reaction NAD(+) + (ADP-D-ribosyl)n-acceptor = nicotinamide + (ADP-D-ribosyl)n+1-acceptor + H(+).. With respect to regulation, activity increases up to 5-6 times with Mg(2+) at 50 uM or higher ion concentration. 3-aminobenzamide (3-ABA) inhibits the activity by up to half and nicotinamide to a lesser extent. Zn(2+) inhibits the activity to half-maximal rate but at 500 uM concentration of the ion. Functionally, catalyzes auto- and hetero-ADP ribosylation and produces short oligomers by elongating the ADP-ribose chain (up to 6-mer). Binds DNA non-specifically but with high affinity. Forms very stable complexes with circular DNA wherein the circular DNA confers thermostability compared to linear DNA. This Saccharolobus solfataricus (Sulfolobus solfataricus) protein is NAD(+) ADP-ribosyltransferase.